A 318-amino-acid polypeptide reads, in one-letter code: S-adenosylmethionine/S-adenosylhomocysteine transporter (318 aa).

10 helical membrane passes run 7-27 (FANLYVEPMAIFLIFLNAFIW), 44-64 (LFVTGSRMVLAGIVLFGLLLF), 76-96 (VMPIVLLSVIGFYLTNVLEFI), 105-125 (KACFIYGFSPFTAAFCSYVQL), 134-154 (LGGLSLGLVSYLVYLLFGGGE), 163-183 (LGMPELLLIVATCLSSYGWTL), 193-213 (SLSITAINAYAMVIAGILSLA), 231-251 (LFLQSIGALVIFSNLICYNLF), 262-282 (FLSFCNLVMPLFASFFGWLLL), and 285-305 (SFPPGLLFAVGFMVLGCRLIY). Residues 25 to 148 (FIWSSSFALS…LGLVSYLVYL (124 aa)) enclose the EamA 1 domain. The 114-residue stretch at 191–304 (CESLSITAIN…GFMVLGCRLI (114 aa)) folds into the EamA 2 domain.

This sequence belongs to the drug/metabolite transporter (DMT) superfamily. 10 TMS drug/metabolite exporter (DME) (TC 2.A.7.3) family.

It localises to the cell membrane. Functionally, transports S-adenosylmethionine (SAM) and S-adenosylhomocysteine (SAH). Allows bacteria to acquire SAM from the eukaryotic host cell and to likely remove the toxic by-product SAH. This is S-adenosylmethionine/S-adenosylhomocysteine transporter from Chlamydia muridarum (strain MoPn / Nigg).